The following is a 274-amino-acid chain: Rhamnulose-1-phosphate aldolase (274 aa).

Glutamate 117 is an active-site residue. The Zn(2+) site is built by histidine 141, histidine 143, and histidine 212.

This sequence belongs to the aldolase class II family. RhaD subfamily. As to quaternary structure, homotetramer. Zn(2+) serves as cofactor.

It is found in the cytoplasm. The enzyme catalyses L-rhamnulose 1-phosphate = (S)-lactaldehyde + dihydroxyacetone phosphate. It functions in the pathway carbohydrate degradation; L-rhamnose degradation; glycerone phosphate from L-rhamnose: step 3/3. In terms of biological role, catalyzes the reversible cleavage of L-rhamnulose-1-phosphate to dihydroxyacetone phosphate (DHAP) and L-lactaldehyde. The protein is Rhamnulose-1-phosphate aldolase of Yersinia pseudotuberculosis serotype IB (strain PB1/+).